Reading from the N-terminus, the 693-residue chain is Sodium-dependent dopamine transporter (693 aa).

Topologically, residues 1 to 56 (MSEGRCSVAHMSSVVAPAKEANAMGPKAVELVLVKEQNGVQLTNSTLLNPPQSPTE) are cytoplasmic. The discontinuously helical transmembrane segment at 57-95 (AQDRETWSKKADFLLSVIGFAVDLANVWRFPYLCYKNGG) threads the bilayer. Na(+) is bound by residues G75, A77, V78, D79, and N82. Residue D79 coordinates dopamine. 2 consecutive transmembrane segments (helical) span residues 96–127 (GAFL…NREG) and 128–171 (AAGV…LSSF). S149 and G153 together coordinate dopamine. Residues 172-233 (TTELPWTHCN…SQGIDDLGPP (62 aa)) are Extracellular-facing. An intrachain disulfide couples C180 to C189. 3 N-linked (GlcNAc...) asparagine glycosylation sites follow: N181, N196, and N202. A run of 2 helical transmembrane segments spans residues 234 to 253 (RWQL…FSLW) and 254 to 284 (KGVK…GITL). At 285–303 (PGAVDAIRAYLSVDFHRLC) the chain is on the extracellular side. Residues 304-332 (EASVWIDAAIQICFSLGVGLGVLIAFSSY) traverse the membrane as a discontinuously helical segment. Chloride is bound at residue Q314. F317 is a binding site for dopamine. Na(+)-binding residues include S318 and N350. Chloride is bound at residue S318. The helical transmembrane segment at 333–373 (NKFTNNCYRDAIITTSVNSLTSFSSGFVVFSFLGYMAQKHS) threads the bilayer. S354 contributes to the chloride binding site. Topologically, residues 374–397 (VPIGDVAKDGPGLIFIIYPEALAT) are extracellular. A run of 3 helical transmembrane segments spans residues 398–439 (LPLS…QLLH), 440–463 (RHRE…CVTN), and 464–496 (GGIY…AWFY). Positions 415, 418, and 419 each coordinate Na(+). 2 residues coordinate dopamine: S419 and A420. At 497–513 (GVWQFSDDIKQMTGRRP) the chain is on the cytoplasmic side. The chain crosses the membrane as a helical span at residues 514–539 (SLYWRLCWKFVSPCFLLFVVVVSIAT). At 540-550 (FRPPHYGAYVF) the chain is on the extracellular side. A helical membrane pass occupies residues 551 to 580 (PEWATALGWAIAASSMSVVPIYAAYKLCSL). Residues 558–587 (GWAIAASSMSVVPIYAAYKLCSLPGSSREK) are interaction with TGFB1I1. At 581 to 693 (PGSSREKLAY…VESTGLCSVY (113 aa)) the chain is on the cytoplasmic side.

Belongs to the sodium:neurotransmitter symporter (SNF) (TC 2.A.22) family. SLC6A3 subfamily. Monomer. Homooligomer; disulfide-linked. Interacts with PRKCABP and TGFB1I1. Interacts (via N-terminus) with SYNGR3 (via N-terminus). Interacts with SLC18A2. Interacts with TOR1A (ATP-bound); TOR1A regulates SLC6A3 subcellular location. Interacts with alpha-synuclein/SNCA. Interacts with SEPTIN4. As to expression, expressed in the neurons of the substantia nigra of the brain.

It is found in the cell membrane. The protein localises to the cell projection. Its subcellular location is the neuron projection. The protein resides in the axon. The catalysed reaction is dopamine(out) + chloride(out) + Na(+)(out) = dopamine(in) + chloride(in) + Na(+)(in). It catalyses the reaction (R)-noradrenaline(out) + chloride(out) + Na(+)(out) = (R)-noradrenaline(in) + chloride(in) + Na(+)(in). It carries out the reaction dopamine(out) + chloride(out) + 2 Na(+)(out) = dopamine(in) + chloride(in) + 2 Na(+)(in). With respect to regulation, inhibited by GBR 12909 dihydrochloride, amphetamine and cocaine. Inhibited by zinc ions. Its function is as follows. Mediates sodium- and chloride-dependent transport of dopamine. Also mediates sodium- and chloride-dependent transport of norepinephrine (also known as noradrenaline). Regulator of light-dependent retinal hyaloid vessel regression, downstream of OPN5 signaling. The sequence is that of Sodium-dependent dopamine transporter (SLC6A3) from Bos taurus (Bovine).